The chain runs to 505 residues: Kelch-like protein 42 (505 aa).

The BTB domain maps to 5–78 (EMVQIRLEDR…INAGGAREGW (74 aa)). Position 43 is a phosphoserine (serine 43). Kelch repeat units lie at residues 176–234 (PGDV…PLAN), 235–282 (NLPP…NEWL), 284–325 (VASM…DAWN), 327–372 (VAPL…DMWT), 374–429 (FETC…RQWL), and 431–480 (LKEN…DSWE).

In terms of assembly, component of the BCR(KLHL42) E3 ubiquitin ligase complex, at least composed of CUL3 and KLHL42. Interacts (via the BTB domain) with CUL3. Interacts (via the kelch domains) with KATNA1.

The protein resides in the cytoplasm. It is found in the cytoskeleton. The protein localises to the spindle. The protein operates within protein modification; protein ubiquitination. Its function is as follows. Substrate-specific adapter of a BCR (BTB-CUL3-RBX1) E3 ubiquitin-protein ligase complex required for mitotic progression and cytokinesis. The BCR(KLHL42) E3 ubiquitin ligase complex mediates the ubiquitination and subsequent degradation of KATNA1. Involved in microtubule dynamics throughout mitosis. This Homo sapiens (Human) protein is Kelch-like protein 42 (KLHL42).